The sequence spans 237 residues: MPRIKICGIRTGEEARWAVEAGADALGFIFVPHSKRYIQPETAREIILNLPPLISKVGVFAQASPEHVGRIVHECSLDTIQLHGNEDPRLYRHLSVTKIKAFSFPSAPAPGNSSEAAPDFSLVETSPSSSLPTSFRELPPASLHGILLDSSAGGRTGGTGIPLPWHTPVFQDFLHQVGDLGYPLILAGGLNPDNILEAIRLTRPYGVDVSSGVERNGRKDREKIQHFISQARKESPL.

Belongs to the TrpF family.

The catalysed reaction is N-(5-phospho-beta-D-ribosyl)anthranilate = 1-(2-carboxyphenylamino)-1-deoxy-D-ribulose 5-phosphate. The protein operates within amino-acid biosynthesis; L-tryptophan biosynthesis; L-tryptophan from chorismate: step 3/5. The protein is N-(5'-phosphoribosyl)anthranilate isomerase of Desulfitobacterium hafniense (strain Y51).